Consider the following 1193-residue polypeptide: DNA-directed RNA polymerase subunit beta (1193 aa).

Residues 1153-1162 (EMRDLEDDED) show a composition bias toward acidic residues. Residues 1153–1193 (EMRDLEDDEDAKQNEGLSLPNDEESEELVSADAERDVVTKE) are disordered. The span at 1184 to 1193 (DAERDVVTKE) shows a compositional bias: basic and acidic residues.

This sequence belongs to the RNA polymerase beta chain family. The RNAP catalytic core consists of 2 alpha, 1 beta, 1 beta' and 1 omega subunit. When a sigma factor is associated with the core the holoenzyme is formed, which can initiate transcription.

It catalyses the reaction RNA(n) + a ribonucleoside 5'-triphosphate = RNA(n+1) + diphosphate. Its function is as follows. DNA-dependent RNA polymerase catalyzes the transcription of DNA into RNA using the four ribonucleoside triphosphates as substrates. The polypeptide is DNA-directed RNA polymerase subunit beta (Bacillus licheniformis (strain ATCC 14580 / DSM 13 / JCM 2505 / CCUG 7422 / NBRC 12200 / NCIMB 9375 / NCTC 10341 / NRRL NRS-1264 / Gibson 46)).